The chain runs to 983 residues: UPF0182 protein CMM_1204 (983 aa).

A run of 7 helical transmembrane segments spans residues Leu-16–Phe-36, Trp-56–Val-76, Leu-108–Gly-128, Phe-161–Leu-181, Ile-205–Asp-225, Ala-255–Gly-275, and Ile-281–Ile-301. Polar residues predominate over residues Gln-699–Ala-714. Disordered regions lie at residues Gln-699–Ala-718 and Asp-884–Val-936. Residues Gly-902–Gly-918 show a composition bias toward gly residues. Residues Ser-919 to Ala-933 are compositionally biased toward low complexity.

The protein belongs to the UPF0182 family.

The protein localises to the cell membrane. The protein is UPF0182 protein CMM_1204 of Clavibacter michiganensis subsp. michiganensis (strain NCPPB 382).